Here is a 401-residue protein sequence, read N- to C-terminus: Methionine import ATP-binding protein MetN (401 aa).

The 243-residue stretch at 6–248 folds into the ABC transporter domain; the sequence is ITFDHVVKEF…PQQPVTKRFI (243 aa). 45 to 52 lines the ATP pocket; the sequence is GYSGAGKS.

Belongs to the ABC transporter superfamily. Methionine importer (TC 3.A.1.24) family. The complex is composed of two ATP-binding proteins (MetN), two transmembrane proteins (MetI) and a solute-binding protein (MetQ).

Its subcellular location is the cell membrane. The catalysed reaction is L-methionine(out) + ATP + H2O = L-methionine(in) + ADP + phosphate + H(+). It catalyses the reaction D-methionine(out) + ATP + H2O = D-methionine(in) + ADP + phosphate + H(+). Part of the ABC transporter complex MetNIQ involved in methionine import. Responsible for energy coupling to the transport system. The sequence is that of Methionine import ATP-binding protein MetN from Bifidobacterium longum (strain NCC 2705).